A 715-amino-acid polypeptide reads, in one-letter code: Nucleolar complex protein 2 homolog (715 aa).

Disordered stretches follow at residues 17–71 (SKRI…HKLD), 85–132 (FLQQ…DKTK), and 638–715 (ERSA…SDED). Residues 89-128 (EDADLLNMEDDGDDDEDDDEDDEDEEEEESDDDEDDEEDD) show a composition bias toward acidic residues. Basic and acidic residues predominate over residues 638-660 (ERSAVENSKKDDKKKKKEEEAAA).

The protein belongs to the NOC2 family.

It is found in the nucleus. Functionally, required for normal somatic gonad development and for regulation of germline development and proliferation. This chain is Nucleolar complex protein 2 homolog (pro-2), found in Caenorhabditis elegans.